Consider the following 270-residue polypeptide: 3-phenylpropionate-dihydrodiol/cinnamic acid-dihydrodiol dehydrogenase (270 aa).

Residue 10–34 (FITGGGSGLGLALVERFIEEGAQVA) participates in NAD(+) binding. S143 serves as a coordination point for substrate. The active-site Proton acceptor is the Y156.

Belongs to the short-chain dehydrogenases/reductases (SDR) family.

It carries out the reaction 3-(cis-5,6-dihydroxycyclohexa-1,3-dien-1-yl)propanoate + NAD(+) = 3-(2,3-dihydroxyphenyl)propanoate + NADH + H(+). The enzyme catalyses (2E)-3-(cis-5,6-dihydroxycyclohexa-1,3-dien-1-yl)prop-2-enoate + NAD(+) = (2E)-3-(2,3-dihydroxyphenyl)prop-2-enoate + NADH + H(+). It participates in aromatic compound metabolism; 3-phenylpropanoate degradation. In terms of biological role, converts 3-phenylpropionate-dihydrodiol (PP-dihydrodiol) and cinnamic acid-dihydrodiol (CI-dihydrodiol) into 3-(2,3-dihydroxylphenyl)propanoic acid (DHPP) and 2,3-dihydroxicinnamic acid (DHCI), respectively. This is 3-phenylpropionate-dihydrodiol/cinnamic acid-dihydrodiol dehydrogenase from Escherichia coli (strain K12 / MC4100 / BW2952).